A 262-amino-acid polypeptide reads, in one-letter code: Sperm microtubule inner protein 6 (262 aa).

Belongs to the SPMIP6 family. As to quaternary structure, microtubule inner protein component of sperm flagellar doublet microtubules. Interacts with alpha-tubulin.

Its subcellular location is the cytoplasm. It is found in the cytoskeleton. It localises to the nucleus. The protein localises to the mitochondrion. The protein resides in the flagellum axoneme. Functionally, may participate in intramanchette transport and midpiece formation of the sperm tail. May play a potential role in somatic cell proliferation. The sequence is that of Sperm microtubule inner protein 6 (SPMIP6) from Macaca fascicularis (Crab-eating macaque).